The following is a 560-amino-acid chain: Dihydroxy-acid dehydratase (560 aa).

D78 serves as a coordination point for Mg(2+). Position 119 (C119) interacts with [2Fe-2S] cluster. The Mg(2+) site is built by D120 and K121. At K121 the chain carries N6-carboxylysine. [2Fe-2S] cluster is bound at residue C192. E446 provides a ligand contact to Mg(2+). The active-site Proton acceptor is the S472.

The protein belongs to the IlvD/Edd family. In terms of assembly, homodimer. [2Fe-2S] cluster serves as cofactor. The cofactor is Mg(2+).

It carries out the reaction (2R)-2,3-dihydroxy-3-methylbutanoate = 3-methyl-2-oxobutanoate + H2O. The enzyme catalyses (2R,3R)-2,3-dihydroxy-3-methylpentanoate = (S)-3-methyl-2-oxopentanoate + H2O. The protein operates within amino-acid biosynthesis; L-isoleucine biosynthesis; L-isoleucine from 2-oxobutanoate: step 3/4. It participates in amino-acid biosynthesis; L-valine biosynthesis; L-valine from pyruvate: step 3/4. Functionally, functions in the biosynthesis of branched-chain amino acids. Catalyzes the dehydration of (2R,3R)-2,3-dihydroxy-3-methylpentanoate (2,3-dihydroxy-3-methylvalerate) into 2-oxo-3-methylpentanoate (2-oxo-3-methylvalerate) and of (2R)-2,3-dihydroxy-3-methylbutanoate (2,3-dihydroxyisovalerate) into 2-oxo-3-methylbutanoate (2-oxoisovalerate), the penultimate precursor to L-isoleucine and L-valine, respectively. This Anaeromyxobacter sp. (strain K) protein is Dihydroxy-acid dehydratase.